The sequence spans 294 residues: Negative regulator of the PHO system (294 aa).

Residues F7–F289 form the Protein kinase domain. Residues L13–V21 and K36 each bind ATP. The active-site Proton acceptor is the D130.

It belongs to the protein kinase superfamily. CMGC Ser/Thr protein kinase family. CDC2/CDKX subfamily. Interacts with a number of cyclins.

The enzyme catalyses L-seryl-[protein] + ATP = O-phospho-L-seryl-[protein] + ADP + H(+). It carries out the reaction L-threonyl-[protein] + ATP = O-phospho-L-threonyl-[protein] + ADP + H(+). In terms of biological role, when phosphate concentrations are high it phosphorylates the PHO4 transcription factor thus establishing repression. The chain is Negative regulator of the PHO system (PHO85) from Yarrowia lipolytica (strain CLIB 122 / E 150) (Yeast).